The chain runs to 217 residues: Imidazole glycerol phosphate synthase subunit HisH (217 aa).

The 215-residue stretch at 3 to 217 (TIAIVDYGVG…LYRNFVHWNP (215 aa)) folds into the Glutamine amidotransferase type-1 domain. Residue cysteine 82 is the Nucleophile of the active site. Catalysis depends on residues histidine 197 and glutamate 199.

In terms of assembly, heterodimer of HisH and HisF.

The protein resides in the cytoplasm. The enzyme catalyses 5-[(5-phospho-1-deoxy-D-ribulos-1-ylimino)methylamino]-1-(5-phospho-beta-D-ribosyl)imidazole-4-carboxamide + L-glutamine = D-erythro-1-(imidazol-4-yl)glycerol 3-phosphate + 5-amino-1-(5-phospho-beta-D-ribosyl)imidazole-4-carboxamide + L-glutamate + H(+). The catalysed reaction is L-glutamine + H2O = L-glutamate + NH4(+). It functions in the pathway amino-acid biosynthesis; L-histidine biosynthesis; L-histidine from 5-phospho-alpha-D-ribose 1-diphosphate: step 5/9. Functionally, IGPS catalyzes the conversion of PRFAR and glutamine to IGP, AICAR and glutamate. The HisH subunit catalyzes the hydrolysis of glutamine to glutamate and ammonia as part of the synthesis of IGP and AICAR. The resulting ammonia molecule is channeled to the active site of HisF. The protein is Imidazole glycerol phosphate synthase subunit HisH of Cupriavidus pinatubonensis (strain JMP 134 / LMG 1197) (Cupriavidus necator (strain JMP 134)).